The chain runs to 403 residues: Arginine biosynthesis bifunctional protein ArgJ (403 aa).

Substrate-binding residues include threonine 151, lysine 177, threonine 188, glutamate 275, asparagine 398, and serine 403. Threonine 188 (nucleophile) is an active-site residue.

Belongs to the ArgJ family. Heterotetramer of two alpha and two beta chains.

It is found in the cytoplasm. It carries out the reaction N(2)-acetyl-L-ornithine + L-glutamate = N-acetyl-L-glutamate + L-ornithine. The enzyme catalyses L-glutamate + acetyl-CoA = N-acetyl-L-glutamate + CoA + H(+). It participates in amino-acid biosynthesis; L-arginine biosynthesis; L-ornithine and N-acetyl-L-glutamate from L-glutamate and N(2)-acetyl-L-ornithine (cyclic): step 1/1. The protein operates within amino-acid biosynthesis; L-arginine biosynthesis; N(2)-acetyl-L-ornithine from L-glutamate: step 1/4. Functionally, catalyzes two activities which are involved in the cyclic version of arginine biosynthesis: the synthesis of N-acetylglutamate from glutamate and acetyl-CoA as the acetyl donor, and of ornithine by transacetylation between N(2)-acetylornithine and glutamate. In Caulobacter vibrioides (strain ATCC 19089 / CIP 103742 / CB 15) (Caulobacter crescentus), this protein is Arginine biosynthesis bifunctional protein ArgJ.